Consider the following 477-residue polypeptide: Aspartyl/glutamyl-tRNA(Asn/Gln) amidotransferase subunit B (477 aa).

The protein belongs to the GatB/GatE family. GatB subfamily. Heterotrimer of A, B and C subunits.

The enzyme catalyses L-glutamyl-tRNA(Gln) + L-glutamine + ATP + H2O = L-glutaminyl-tRNA(Gln) + L-glutamate + ADP + phosphate + H(+). The catalysed reaction is L-aspartyl-tRNA(Asn) + L-glutamine + ATP + H2O = L-asparaginyl-tRNA(Asn) + L-glutamate + ADP + phosphate + 2 H(+). In terms of biological role, allows the formation of correctly charged Asn-tRNA(Asn) or Gln-tRNA(Gln) through the transamidation of misacylated Asp-tRNA(Asn) or Glu-tRNA(Gln) in organisms which lack either or both of asparaginyl-tRNA or glutaminyl-tRNA synthetases. The reaction takes place in the presence of glutamine and ATP through an activated phospho-Asp-tRNA(Asn) or phospho-Glu-tRNA(Gln). In Clostridium tetani (strain Massachusetts / E88), this protein is Aspartyl/glutamyl-tRNA(Asn/Gln) amidotransferase subunit B.